We begin with the raw amino-acid sequence, 538 residues long: Dihomomethionine N-hydroxylase (538 aa).

The chain crosses the membrane as a helical span at residues Leu8–Leu28.

Belongs to the cytochrome P450 family. It depends on heme as a cofactor. Highly expressed in cotyledons, leaves, stems and siliques. Detected in flowers and lateral roots, but not in the main root. Expressed only in the vascular bundles in apical plant parts.

It is found in the endoplasmic reticulum membrane. It carries out the reaction an L-polyhomomethionine + 2 reduced [NADPH--hemoprotein reductase] + 2 O2 = an (E)-omega-(methylsulfanyl)-alkanal oxime + 2 oxidized [NADPH--hemoprotein reductase] + CO2 + 3 H2O + 2 H(+). It catalyses the reaction L-dihomomethionine + 2 reduced [NADPH--hemoprotein reductase] + 2 O2 = (E)-5-(methylsulfanyl)pentanal oxime + 2 oxidized [NADPH--hemoprotein reductase] + CO2 + 3 H2O + 2 H(+). The enzyme catalyses L-trihomomethionine + 2 reduced [NADPH--hemoprotein reductase] + 2 O2 = (E)-6-(methylsulfanyl)hexanal oxime + 2 oxidized [NADPH--hemoprotein reductase] + CO2 + 3 H2O + 2 H(+). In terms of biological role, catalyzes the conversion of the short chain elongated methionines di-, tri-, and tetrahomomethionine to their respective aldoximes 5-methylthiopentanaldoxime, 6-methylthiohexanaldoxime, and 7-methylheptanaldoxime. This Arabidopsis thaliana (Mouse-ear cress) protein is Dihomomethionine N-hydroxylase (CYP79F1).